A 315-amino-acid chain; its full sequence is Iron(3+)-hydroxamate-binding protein FhuD (315 aa).

The N-terminal stretch at 1–23 (MTHIYKKLGAAFFALLLIAALAA) is a signal peptide. A lipid anchor (N-palmitoyl cysteine) is attached at cysteine 24. Cysteine 24 carries the S-diacylglycerol cysteine lipid modification. A Fe/B12 periplasmic-binding domain is found at 60–315 (RVVVMADGYY…LEFITESLTK (256 aa)).

It belongs to the bacterial solute-binding protein 8 family. In terms of assembly, the complex is composed of an ATP-binding protein (FhuC), two transmembrane proteins (FhuB and FhuG) and a solute-binding protein (FhuD or YxeB).

It is found in the cell membrane. Its subcellular location is the membrane raft. In terms of biological role, part of the ABC transporter complex FhuCBGD involved in iron(3+)-hydroxamate import. Binds the iron(3+)-hydroxamate complex and transfers it to the membrane-bound permease. Required for the transport of ferrichrome and coprogen. This is Iron(3+)-hydroxamate-binding protein FhuD (fhuD) from Bacillus subtilis (strain 168).